Consider the following 187-residue polypeptide: Ribosome maturation factor RimM (187 aa).

The 74-residue stretch at 96–169 folds into the PRC barrel domain; it reads EDEFFYADLE…KLVIDPTAAG (74 aa).

The protein belongs to the RimM family. In terms of assembly, binds ribosomal protein uS19.

It localises to the cytoplasm. An accessory protein needed during the final step in the assembly of 30S ribosomal subunit, possibly for assembly of the head region. Essential for efficient processing of 16S rRNA. May be needed both before and after RbfA during the maturation of 16S rRNA. It has affinity for free ribosomal 30S subunits but not for 70S ribosomes. The sequence is that of Ribosome maturation factor RimM from Rhizobium meliloti (strain 1021) (Ensifer meliloti).